Here is a 658-residue protein sequence, read N- to C-terminus: Glycogen debranching enzyme (658 aa).

Residue Asp336 is the Nucleophile of the active site. Residue Glu371 is the Proton donor of the active site. Positions Glu459–Gly484 are disordered.

Belongs to the glycosyl hydrolase 13 family.

It catalyses the reaction Hydrolysis of (1-&gt;6)-alpha-D-glucosidic linkages to branches with degrees of polymerization of three or four glucose residues in limit dextrin.. It participates in glycan degradation; glycogen degradation. Functionally, removes maltotriose and maltotetraose chains that are attached by 1,6-alpha-linkage to the limit dextrin main chain, generating a debranched limit dextrin. This Salmonella paratyphi A (strain ATCC 9150 / SARB42) protein is Glycogen debranching enzyme.